The chain runs to 181 residues: MFTRAVSRLSRKRPPSDIHDGDGSSSSGHQSLKSTAKWASSLENLLEDPEGVQRFREFLKKEFSEENVLFWLACEDFKKTEDRKQMQEKAKEIYMTFLSNKASSQVNVEGQSRLTEKILEEPHPLMFQKLQDQIFNLMKYDSYSRFLKSDLFLKPKRTEEEEEEPPDAQTAAKRASRIYNT.

Residues 1–35 (MFTRAVSRLSRKRPPSDIHDGDGSSSSGHQSLKST) are disordered. Serine 24 and serine 41 each carry phosphoserine. The region spanning 41–156 (SLENLLEDPE…LKSDLFLKPK (116 aa)) is the RGS domain. Cysteine 74 carries the S-palmitoyl cysteine lipid modification. The interval 155-181 (PKRTEEEEEEPPDAQTAAKRASRIYNT) is disordered. The residue at position 176 (serine 176) is a Phosphoserine.

As to quaternary structure, interacts with GNAZ, GNAI1 and GNAI3. Associates specifically with the activated, GTP-bound forms of GNAZ and GNAI3.

The protein localises to the cytoplasm. Its subcellular location is the cytosol. The protein resides in the nucleus. Functionally, regulates G protein-coupled receptor signaling cascades, including signaling downstream of the muscarinic acetylcholine receptor CHRM2. Inhibits signal transduction by increasing the GTPase activity of G protein alpha subunits, thereby driving them into their inactive GDP-bound form. Modulates the activity of potassium channels that are activated in response to CHRM2 signaling. Activity on GNAZ is inhibited by palmitoylation of the G-protein. This Mus musculus (Mouse) protein is Regulator of G-protein signaling 10 (Rgs10).